Consider the following 157-residue polypeptide: Transcription initiation factor IIA large subunit (157 aa).

Belongs to the TFIIA subunit 1 family. As to quaternary structure, TFIIA is a heterodimer of the large subunit and the small subunit gamma.

The protein resides in the nucleus. In terms of biological role, TFIIA is a component of the transcription machinery of RNA polymerase II and plays an important role in transcriptional activation. The polypeptide is Transcription initiation factor IIA large subunit (TOA1) (Encephalitozoon cuniculi (strain GB-M1) (Microsporidian parasite)).